Reading from the N-terminus, the 215-residue chain is Pyrrolidone-carboxylate peptidase (215 aa).

Catalysis depends on residues glutamate 80, cysteine 143, and histidine 167.

The protein belongs to the peptidase C15 family. In terms of assembly, homotetramer.

It localises to the cytoplasm. The enzyme catalyses Release of an N-terminal pyroglutamyl group from a polypeptide, the second amino acid generally not being Pro.. In terms of biological role, removes 5-oxoproline from various penultimate amino acid residues except L-proline. In Bacillus cereus (strain ZK / E33L), this protein is Pyrrolidone-carboxylate peptidase.